The sequence spans 157 residues: 6,7-dimethyl-8-ribityllumazine synthase (157 aa).

5-amino-6-(D-ribitylamino)uracil contacts are provided by residues Phe-22, 57–59 (AYE), and 81–83 (TVI). 86-87 (GT) serves as a coordination point for (2S)-2-hydroxy-3-oxobutyl phosphate. His-89 serves as the catalytic Proton donor. Phe-114 provides a ligand contact to 5-amino-6-(D-ribitylamino)uracil. A (2S)-2-hydroxy-3-oxobutyl phosphate-binding site is contributed by Arg-128.

The protein belongs to the DMRL synthase family. In terms of assembly, forms an icosahedral capsid composed of 60 subunits, arranged as a dodecamer of pentamers.

The catalysed reaction is (2S)-2-hydroxy-3-oxobutyl phosphate + 5-amino-6-(D-ribitylamino)uracil = 6,7-dimethyl-8-(1-D-ribityl)lumazine + phosphate + 2 H2O + H(+). The protein operates within cofactor biosynthesis; riboflavin biosynthesis; riboflavin from 2-hydroxy-3-oxobutyl phosphate and 5-amino-6-(D-ribitylamino)uracil: step 1/2. Functionally, catalyzes the formation of 6,7-dimethyl-8-ribityllumazine by condensation of 5-amino-6-(D-ribitylamino)uracil with 3,4-dihydroxy-2-butanone 4-phosphate. This is the penultimate step in the biosynthesis of riboflavin. The protein is 6,7-dimethyl-8-ribityllumazine synthase of Haemophilus influenzae (strain ATCC 51907 / DSM 11121 / KW20 / Rd).